The following is a 137-amino-acid chain: Small ribosomal subunit protein uS12 (137 aa).

The interval 1-55 (MPTINQLVRKPRQSKSKKSDSPALNRNFNSKKKKFTDLNSPQKRGVCTRVGTMTP) is disordered. Asp102 carries the 3-methylthioaspartic acid modification. Residues 118–137 (SGVDGRRQGRSLYGTKKPKK) form a disordered region.

The protein belongs to the universal ribosomal protein uS12 family. Part of the 30S ribosomal subunit. Contacts proteins S8 and S17. May interact with IF1 in the 30S initiation complex.

With S4 and S5 plays an important role in translational accuracy. In terms of biological role, interacts with and stabilizes bases of the 16S rRNA that are involved in tRNA selection in the A site and with the mRNA backbone. Located at the interface of the 30S and 50S subunits, it traverses the body of the 30S subunit contacting proteins on the other side and probably holding the rRNA structure together. The combined cluster of proteins S8, S12 and S17 appears to hold together the shoulder and platform of the 30S subunit. This is Small ribosomal subunit protein uS12 from Staphylococcus saprophyticus subsp. saprophyticus (strain ATCC 15305 / DSM 20229 / NCIMB 8711 / NCTC 7292 / S-41).